Here is a 98-residue protein sequence, read N- to C-terminus: MEAPSENGFYFYVLWCADQTLYTGYTVNLKQRVARHNSGQGAKYTRVPKRRPVQLLYYESFENQHDAMSAEYFFKKQSRKEKLKYLKNNGVIVTTFSH.

One can recognise a GIY-YIG domain in the interval 7–84; it reads NGFYFYVLWC…KKQSRKEKLK (78 aa).

It belongs to the UPF0213 family.

This is UPF0213 protein in ldhD 5'region from Pediococcus acidilactici.